The following is a 281-amino-acid chain: Pantothenate synthetase (281 aa).

30 to 37 contributes to the ATP binding site; sequence MGYLHEGH. Residue histidine 37 is the Proton donor of the active site. Glutamine 61 is a (R)-pantoate binding site. Glutamine 61 contacts beta-alanine. 147-150 serves as a coordination point for ATP; the sequence is GEKD. Glutamine 153 is a binding site for (R)-pantoate. Residues isoleucine 176 and 184 to 187 each bind ATP; that span reads KSSR.

The protein belongs to the pantothenate synthetase family. As to quaternary structure, homodimer.

It localises to the cytoplasm. It catalyses the reaction (R)-pantoate + beta-alanine + ATP = (R)-pantothenate + AMP + diphosphate + H(+). It participates in cofactor biosynthesis; (R)-pantothenate biosynthesis; (R)-pantothenate from (R)-pantoate and beta-alanine: step 1/1. Functionally, catalyzes the condensation of pantoate with beta-alanine in an ATP-dependent reaction via a pantoyl-adenylate intermediate. The chain is Pantothenate synthetase from Clostridium botulinum (strain Loch Maree / Type A3).